Here is a 507-residue protein sequence, read N- to C-terminus: Hippocampus abundant transcript-like protein 1 (507 aa).

The tract at residues 1-22 is disordered; that stretch reads MSTDGESPEEPGWKAVASPKAS. Residues 1-51 are Extracellular-facing; that stretch reads MSTDGESPEEPGWKAVASPKASAMPEKRGSAQAASSSWLQGFGQPSVYHAA. A helical transmembrane segment spans residues 52 to 72; it reads FVIFFEFFAWGLLTTPMLTVL. Topologically, residues 73–84 are cytoplasmic; that stretch reads HETFPQHTFLMN. The helical transmembrane segment at 85 to 105 threads the bilayer; the sequence is GLIQGVKGLLSFLSAPLIGAL. At 106–113 the chain is on the extracellular side; it reads SDVWGRKP. Residues 114 to 134 form a helical membrane-spanning segment; it reads FLLGTVFFTCFPIPLMRISPW. Topologically, residues 135 to 136 are cytoplasmic; sequence WY. Residues 137–157 form a helical membrane-spanning segment; that stretch reads FGMISVSGVFSVTFSVIFAYV. Topologically, residues 158-170 are extracellular; it reads ADFTQEHERSTAY. The chain crosses the membrane as a helical span at residues 171-191; the sequence is GWVSATFAASLVSSPAIGTYL. Residues 192-198 lie on the Cytoplasmic side of the membrane; that stretch reads SSNYGDS. Residues 199–219 traverse the membrane as a helical segment; the sequence is LVVLVATVVALLDICFILVAV. Residues 220–257 lie on the Extracellular side of the membrane; sequence PESLPEKIRPASWGAQISWKQADPFASLKKVGKDSTVL. A helical transmembrane segment spans residues 258–278; the sequence is LICITVFLSYLPEAGQYSSFF. The Cytoplasmic portion of the chain corresponds to 279–283; that stretch reads LYLRQ. Residues 284 to 304 form a helical membrane-spanning segment; sequence VIGFGSVKIVAFIAMVGILSI. Over 305-323 the chain is Extracellular; that stretch reads LAQTVFLSKLMRSLGNKNT. The chain crosses the membrane as a helical span at residues 324–344; sequence VLLGLGFQILQLAWYGFGAQA. At 345 to 347 the chain is on the cytoplasmic side; that stretch reads WMM. Residues 348–368 traverse the membrane as a helical segment; the sequence is WAAGTVAAMSSITFPAVSALI. The Extracellular segment spans residues 369–389; the sequence is SRNAESDQQGVAQGIITGIRG. A helical transmembrane segment spans residues 390 to 410; that stretch reads LCNGLGPALYGFIFYLFHVEL. The Cytoplasmic portion of the chain corresponds to 411 to 430; the sequence is NELGPKLDSDNDPLQGAFIP. A helical membrane pass occupies residues 431–451; it reads GPPFLFGACIVLMSFLVALFI. The Extracellular segment spans residues 452–507; it reads PEYRKTGGVQKHNNSISGSLSTPPERGSDEDIEPLLQDSNIWELSSEEPGNQCTEL. Residues 462-473 show a composition bias toward polar residues; the sequence is KHNNSISGSLST. Positions 462 to 483 are disordered; it reads KHNNSISGSLSTPPERGSDEDI. N-linked (GlcNAc...) asparagine glycosylation occurs at Asn464.

Belongs to the major facilitator superfamily.

The protein resides in the membrane. This is Hippocampus abundant transcript-like protein 1 from Rattus norvegicus (Rat).